The chain runs to 217 residues: 3,4-dihydroxy-2-butanone 4-phosphate synthase (217 aa).

Residues arginine 37–glutamate 38, aspartate 42, arginine 150–threonine 154, and glutamate 174 contribute to the D-ribulose 5-phosphate site. Residue glutamate 38 coordinates Mg(2+). Histidine 153 contributes to the Mg(2+) binding site.

This sequence belongs to the DHBP synthase family. As to quaternary structure, homodimer. Mg(2+) is required as a cofactor. It depends on Mn(2+) as a cofactor.

It carries out the reaction D-ribulose 5-phosphate = (2S)-2-hydroxy-3-oxobutyl phosphate + formate + H(+). It functions in the pathway cofactor biosynthesis; riboflavin biosynthesis; 2-hydroxy-3-oxobutyl phosphate from D-ribulose 5-phosphate: step 1/1. In terms of biological role, catalyzes the conversion of D-ribulose 5-phosphate to formate and 3,4-dihydroxy-2-butanone 4-phosphate. This is 3,4-dihydroxy-2-butanone 4-phosphate synthase from Salmonella paratyphi A (strain ATCC 9150 / SARB42).